A 314-amino-acid polypeptide reads, in one-letter code: Torsin-2A (314 aa).

A signal peptide spans 1-19 (MAVRWWIIPMLLLVPGSSG). 86-93 (GWSGTGKT) provides a ligand contact to ATP. 2 N-linked (GlcNAc...) asparagine glycosylation sites follow: asparagine 142 and asparagine 283.

This sequence belongs to the ClpA/ClpB family. Torsin subfamily. In terms of assembly, homohexamer.

It is found in the endoplasmic reticulum lumen. This Xenopus laevis (African clawed frog) protein is Torsin-2A (tor2a).